The sequence spans 213 residues: Orotate phosphoribosyltransferase (213 aa).

Residue Lys-26 coordinates 5-phospho-alpha-D-ribose 1-diphosphate. 34–35 (FF) lines the orotate pocket. Residues 72–73 (YK), Arg-99, Lys-100, Lys-103, His-105, and 124–132 (DDVITAGTA) contribute to the 5-phospho-alpha-D-ribose 1-diphosphate site. Thr-128 and Arg-156 together coordinate orotate.

The protein belongs to the purine/pyrimidine phosphoribosyltransferase family. PyrE subfamily. As to quaternary structure, homodimer. Mg(2+) is required as a cofactor.

The catalysed reaction is orotidine 5'-phosphate + diphosphate = orotate + 5-phospho-alpha-D-ribose 1-diphosphate. Its pathway is pyrimidine metabolism; UMP biosynthesis via de novo pathway; UMP from orotate: step 1/2. Catalyzes the transfer of a ribosyl phosphate group from 5-phosphoribose 1-diphosphate to orotate, leading to the formation of orotidine monophosphate (OMP). The protein is Orotate phosphoribosyltransferase of Actinobacillus pleuropneumoniae serotype 5b (strain L20).